A 354-amino-acid polypeptide reads, in one-letter code: Uroporphyrinogen decarboxylase (354 aa).

Substrate is bound by residues 27–31 (RQAGR), phenylalanine 46, aspartate 77, tyrosine 154, threonine 209, and histidine 327.

This sequence belongs to the uroporphyrinogen decarboxylase family. Homodimer.

The protein resides in the cytoplasm. The catalysed reaction is uroporphyrinogen III + 4 H(+) = coproporphyrinogen III + 4 CO2. It functions in the pathway porphyrin-containing compound metabolism; protoporphyrin-IX biosynthesis; coproporphyrinogen-III from 5-aminolevulinate: step 4/4. Catalyzes the decarboxylation of four acetate groups of uroporphyrinogen-III to yield coproporphyrinogen-III. The chain is Uroporphyrinogen decarboxylase from Salmonella typhi.